The following is a 366-amino-acid chain: UDP-N-acetylglucosamine--N-acetylmuramyl-(pentapeptide) pyrophosphoryl-undecaprenol N-acetylglucosamine transferase (366 aa).

Residues 10–12, N124, R166, S196, and Q296 each bind UDP-N-acetyl-alpha-D-glucosamine; that span reads TGG.

The protein belongs to the glycosyltransferase 28 family. MurG subfamily.

Its subcellular location is the cell membrane. The catalysed reaction is di-trans,octa-cis-undecaprenyl diphospho-N-acetyl-alpha-D-muramoyl-L-alanyl-D-glutamyl-meso-2,6-diaminopimeloyl-D-alanyl-D-alanine + UDP-N-acetyl-alpha-D-glucosamine = di-trans,octa-cis-undecaprenyl diphospho-[N-acetyl-alpha-D-glucosaminyl-(1-&gt;4)]-N-acetyl-alpha-D-muramoyl-L-alanyl-D-glutamyl-meso-2,6-diaminopimeloyl-D-alanyl-D-alanine + UDP + H(+). It participates in cell wall biogenesis; peptidoglycan biosynthesis. In terms of biological role, cell wall formation. Catalyzes the transfer of a GlcNAc subunit on undecaprenyl-pyrophosphoryl-MurNAc-pentapeptide (lipid intermediate I) to form undecaprenyl-pyrophosphoryl-MurNAc-(pentapeptide)GlcNAc (lipid intermediate II). The sequence is that of UDP-N-acetylglucosamine--N-acetylmuramyl-(pentapeptide) pyrophosphoryl-undecaprenol N-acetylglucosamine transferase from Alkaliphilus oremlandii (strain OhILAs) (Clostridium oremlandii (strain OhILAs)).